The following is a 276-amino-acid chain: Dermonecrotic toxin LspiSicTox-betaIE4ii (276 aa).

H5 is a catalytic residue. Residues E25 and D27 each coordinate Mg(2+). H41 functions as the Nucleophile in the catalytic mechanism. 2 disulfides stabilise this stretch: C45-C51 and C47-C189. D85 is a Mg(2+) binding site.

Belongs to the arthropod phospholipase D family. Class II subfamily. The cofactor is Mg(2+). As to expression, expressed by the venom gland.

It localises to the secreted. It carries out the reaction an N-(acyl)-sphingosylphosphocholine = an N-(acyl)-sphingosyl-1,3-cyclic phosphate + choline. The enzyme catalyses an N-(acyl)-sphingosylphosphoethanolamine = an N-(acyl)-sphingosyl-1,3-cyclic phosphate + ethanolamine. The catalysed reaction is a 1-acyl-sn-glycero-3-phosphocholine = a 1-acyl-sn-glycero-2,3-cyclic phosphate + choline. It catalyses the reaction a 1-acyl-sn-glycero-3-phosphoethanolamine = a 1-acyl-sn-glycero-2,3-cyclic phosphate + ethanolamine. Functionally, dermonecrotic toxins cleave the phosphodiester linkage between the phosphate and headgroup of certain phospholipids (sphingolipid and lysolipid substrates), forming an alcohol (often choline) and a cyclic phosphate. This toxin acts on sphingomyelin (SM). It may also act on ceramide phosphoethanolamine (CPE), lysophosphatidylcholine (LPC) and lysophosphatidylethanolamine (LPE), but not on lysophosphatidylserine (LPS), and lysophosphatidylglycerol (LPG). It acts by transphosphatidylation, releasing exclusively cyclic phosphate products as second products. Induces dermonecrosis, hemolysis, increased vascular permeability, edema, inflammatory response, and platelet aggregation. The protein is Dermonecrotic toxin LspiSicTox-betaIE4ii of Loxosceles spinulosa (Recluse spider).